Here is a 67-residue protein sequence, read N- to C-terminus: DNA-directed RNA polymerase subunit omega (67 aa).

The protein belongs to the RNA polymerase subunit omega family. As to quaternary structure, the RNAP catalytic core consists of 2 alpha, 1 beta, 1 beta' and 1 omega subunit. When a sigma factor is associated with the core the holoenzyme is formed, which can initiate transcription.

The catalysed reaction is RNA(n) + a ribonucleoside 5'-triphosphate = RNA(n+1) + diphosphate. Its function is as follows. Promotes RNA polymerase assembly. Latches the N- and C-terminal regions of the beta' subunit thereby facilitating its interaction with the beta and alpha subunits. This is DNA-directed RNA polymerase subunit omega from Polaromonas sp. (strain JS666 / ATCC BAA-500).